The primary structure comprises 335 residues: HTH-type transcriptional regulator LacR (335 aa).

The region spanning Met1 to Pro58 is the HTH lacI-type domain. The segment at residues Ile4 to Asn23 is a DNA-binding region (H-T-H motif).

It functions in the pathway carbohydrate metabolism; lactose degradation [regulation]. Functionally, negatively regulates the transcription of the lactose utilization genes lacL and lacM. This is HTH-type transcriptional regulator LacR (lacR) from Lactobacillus helveticus (Lactobacillus suntoryeus).